A 530-amino-acid polypeptide reads, in one-letter code: Cilia- and flagella-associated protein 97 (530 aa).

Serine 19 carries the phosphoserine modification. 2 disordered regions span residues 29–83 (TNSV…PVEN) and 116–258 (IPNR…LSTP). Over residues 35–49 (KQNDDPKERIDKDTK) the composition is skewed to basic and acidic residues. The span at 50–63 (NVNSNTGMQTTENY) shows a compositional bias: polar residues. Residues 67-82 (KGNERNVKFPPEHPVE) are compositionally biased toward basic and acidic residues. The span at 129–139 (GDYYTDGEESS) shows a compositional bias: acidic residues. Residue threonine 133 is modified to Phosphothreonine. Serine 138 and serine 139 each carry phosphoserine. Positions 170–203 (SSSSSSSLSSSSSGSGTDCLDGGSDSHLSDSSPS) are enriched in low complexity. Serine 215 bears the Phosphoserine mark. Positions 227-236 (TETQPSSTTP) are enriched in polar residues. Phosphoserine is present on residues serine 245 and serine 327. Residues 372 to 447 (KNYSFTREEV…ALLKRLEAVK (76 aa)) are a coiled coil. 2 disordered regions span residues 395 to 417 (LSRQAEKPGSKSTIPRSADHPPK) and 483 to 530 (QYSP…TAWL). Positions 491–501 (SRTSSATSGLS) are enriched in polar residues.

It belongs to the CFAP97 family.

The protein is Cilia- and flagella-associated protein 97 of Pongo abelii (Sumatran orangutan).